Here is a 247-residue protein sequence, read N- to C-terminus: MSYDRAITVFSPDGHLFQVEYAQEAVKKGSTAVGVRGKEIVVLGVEKKSVAKLQDERTVRKICALDENVFMAFAGLTADARIVINRARVECQSHRLTVEDPVTVEYITRYIASLKQRYTQSNGRRPFGISALIVGFDFDGTPRLYQTDPSGTYHAWKANAIGRGAKSVREFLEKHYTDEAIETDDLTIKLVIKALLEVVQSGGKNIELAVMRRDQPLKILNPEEIERYVAEIEKEKEENEKKKQKKT.

This sequence belongs to the peptidase T1A family. In terms of assembly, the 26S proteasome consists of a 20S proteasome core and two 19S regulatory subunits. The 20S proteasome core is composed of 28 subunits that are arranged in four stacked rings, resulting in a barrel-shaped structure. The two end rings are each formed by seven alpha subunits, and the two central rings are each formed by seven beta subunits. The catalytic chamber with the active sites is on the inside of the barrel. Phosphorylated in G2 phase.

Its subcellular location is the cytoplasm. The protein localises to the nucleus. Its function is as follows. The proteasome is a multicatalytic proteinase complex which is characterized by its ability to cleave peptides with Arg, Phe, Tyr, Leu, and Glu adjacent to the leaving group at neutral or slightly basic pH. The proteasome has an ATP-dependent proteolytic activity. The chain is Proteasome subunit alpha type-7-B (psma7-b) from Xenopus laevis (African clawed frog).